The chain runs to 867 residues: Mitochondrial escape protein 2 (867 aa).

Disordered regions lie at residues 1 to 20 (MISAHILSRQATRPGHRGPR) and 44 to 66 (RTTRAWESTSSSTASTGSHKESG). The N-terminal 41 residues, 1–41 (MISAHILSRQATRPGHRGPRFTTHSTALLVQRSLGQGLPLA), are a transit peptide targeting the mitochondrion. The Mitochondrial matrix segment spans residues 42 to 308 (HRRTTRAWES…IWAWFTSHPR (267 aa)). The segment covering 48-59 (AWESTSSSTAST) has biased composition (low complexity). Residues 203 to 293 (SRIRVEFVAA…TKLRLSYEQR (91 aa)) enclose the RRM domain. The chain crosses the membrane as a helical span at residues 309 to 329 (IVIPLVAALIAAFTVAVFDPI). Residues 330 to 867 (REFFVKAHVQ…GVVKGQMVKG (538 aa)) are Mitochondrial intermembrane-facing. Residues 614–639 (FAHDGQQKDSESGDQDNDNKNQKKDS) are compositionally biased toward basic and acidic residues. The tract at residues 614-647 (FAHDGQQKDSESGDQDNDNKNQKKDSNTPAPLDP) is disordered. The stretch at 797-857 (LLVLTELAKM…ARLKGLEKEM (61 aa)) forms a coiled coil.

This sequence belongs to the YME2 family.

Its subcellular location is the mitochondrion inner membrane. Functionally, plays a role in maintaining the mitochondrial genome and in controlling the mtDNA escape. Involved in the regulation of mtDNA nucleotide structure and number. May have a dispensable role in early maturation of pre-rRNA. This is Mitochondrial escape protein 2 (msp-45) from Neurospora crassa (strain ATCC 24698 / 74-OR23-1A / CBS 708.71 / DSM 1257 / FGSC 987).